A 529-amino-acid chain; its full sequence is Mannuronan C5-epimerase (529 aa).

Positions 1 to 30 are cleaved as a signal peptide; sequence MGACAMNPQALKGSAMLAAAMLLASGAAMA. PbH1 repeat units follow at residues 229–256, 291–313, 315–338, 340–362, 364–386, and 387–409; these read GTET…SISQ, TTGF…DPHD, SHGL…IISR, VNDS…VLDR, SVNN…TLYE, and SGDN…RVRN. The Proton acceptor role is filled by His312.

This sequence belongs to the D-mannuronate C5-epimerase family.

The protein resides in the periplasm. It catalyses the reaction [(1-&gt;4)-beta-D-mannuronosyl](n) = [alginate](n). It participates in glycan biosynthesis; alginate biosynthesis. Catalyzes the epimerization of beta-D-mannuronate to alpha-L-guluronate during the synthesis of the linear polysaccharide alginate. In addition, is part of a periplasmic protein complex that protects alginate from degradation by AlgL by channeling the newly formed alginate polymer through a scaffold that transfers the alginate polymer through the periplasmic space to the outer membrane secretin AlgE. The sequence is that of Mannuronan C5-epimerase from Pseudomonas fluorescens.